The sequence spans 577 residues: Proline--tRNA ligase (577 aa).

This sequence belongs to the class-II aminoacyl-tRNA synthetase family. ProS type 1 subfamily. In terms of assembly, homodimer.

It is found in the cytoplasm. The catalysed reaction is tRNA(Pro) + L-proline + ATP = L-prolyl-tRNA(Pro) + AMP + diphosphate. Catalyzes the attachment of proline to tRNA(Pro) in a two-step reaction: proline is first activated by ATP to form Pro-AMP and then transferred to the acceptor end of tRNA(Pro). As ProRS can inadvertently accommodate and process non-cognate amino acids such as alanine and cysteine, to avoid such errors it has two additional distinct editing activities against alanine. One activity is designated as 'pretransfer' editing and involves the tRNA(Pro)-independent hydrolysis of activated Ala-AMP. The other activity is designated 'posttransfer' editing and involves deacylation of mischarged Ala-tRNA(Pro). The misacylated Cys-tRNA(Pro) is not edited by ProRS. This Helicobacter pylori (strain P12) protein is Proline--tRNA ligase.